We begin with the raw amino-acid sequence, 603 residues long: Myotubularin (603 aa).

Positions 1–13 (MASAPTSKYNSHS) are enriched in polar residues. A disordered region spans residues 1-32 (MASAPTSKYNSHSLENESIKRTSRDGVNRDVG). A phosphoserine mark is found at Ser13 and Ser18. Over residues 14–32 (LENESIKRTSRDGVNRDVG) the composition is skewed to basic and acidic residues. Residues 29–97 (RDVGETLPRL…GVISRIEKMG (69 aa)) enclose the GRAM domain. The 376-residue stretch at 163–538 (GWTVYNPVEE…RHLELWVNYY (376 aa)) folds into the Myotubularin phosphatase domain. Residues Asn288, Asn313, and Ile314 each contribute to the a 1,2-diacyl-sn-glycero-3-phospho-(1D-myo-inositol-3,5-bisphosphate) site. A 1,2-diacyl-sn-glycero-3-phospho-(1D-myo-inositol-3-phosphate) is bound by residues Asn288, Asn313, and Ile314. Residue Cys375 is the Phosphocysteine intermediate of the active site. The a 1,2-diacyl-sn-glycero-3-phospho-(1D-myo-inositol-3,5-bisphosphate) site is built by Ser376, Asp377, Gly378, Trp379, Asp380, Arg381, Lys417, and Arg421. A 1,2-diacyl-sn-glycero-3-phospho-(1D-myo-inositol-3-phosphate) contacts are provided by Ser376, Asp377, Gly378, Trp379, Asp380, and Arg381. An a 1,2-diacyl-sn-glycero-3-phospho-(1D-myo-inositol-3-phosphate)-binding site is contributed by Arg421. Thr495 bears the Phosphothreonine mark. The disordered stretch occupies residues 580–603 (AKLSDPSASPSSPSQMMPHVQTHF). The span at 583-593 (SDPSASPSSPS) shows a compositional bias: low complexity. Ser588 bears the Phosphoserine mark.

It belongs to the protein-tyrosine phosphatase family. Non-receptor class myotubularin subfamily. As to quaternary structure, heterodimer with MTMR12. Interacts with KMT2A/MLL1 (via SET domain). Interacts with DES in skeletal muscle but not in cardiac muscle. Interacts with SPEG.

The protein resides in the cytoplasm. The protein localises to the cell membrane. It localises to the cell projection. Its subcellular location is the filopodium. It is found in the ruffle. The protein resides in the late endosome. The protein localises to the myofibril. It localises to the sarcomere. The enzyme catalyses a 1,2-diacyl-sn-glycero-3-phospho-(1D-myo-inositol-3-phosphate) + H2O = a 1,2-diacyl-sn-glycero-3-phospho-(1D-myo-inositol) + phosphate. The catalysed reaction is a 1,2-diacyl-sn-glycero-3-phospho-(1D-myo-inositol-3,5-bisphosphate) + H2O = a 1,2-diacyl-sn-glycero-3-phospho-(1D-myo-inositol-5-phosphate) + phosphate. It catalyses the reaction 1,2-dioctanoyl-sn-glycero-3-phospho-(1-D-myo-inositol-3-phosphate) + H2O = 1,2-dioctanoyl-sn-glycero-3-phospho-(1D-myo-inositol) + phosphate. It carries out the reaction 1,2-dioctanoyl-sn-glycero-3-phospho-(1D-myo-inositol-3,5-bisphosphate) + H2O = 1,2-dioctanoyl-sn-glycero-3-phospho-(1D-myo-inositol-5-phosphate) + phosphate. The enzyme catalyses 1,2-dihexadecanoyl-sn-glycero-3-phospho-(1D-myo-inositol-3,5-phosphate) + H2O = 1,2-dihexadecanoyl-sn-glycero-3-phospho-(1D-myo-inositol-5-phosphate) + phosphate. Its activity is regulated as follows. Allosterically activated by phosphatidylinositol 5-phosphate (PI5P). Functionally, lipid phosphatase which dephosphorylates phosphatidylinositol 3-monophosphate (PI3P) and phosphatidylinositol 3,5-bisphosphate (PI(3,5)P2). Has also been shown to dephosphorylate phosphotyrosine- and phosphoserine-containing peptides. Negatively regulates EGFR degradation through regulation of EGFR trafficking from the late endosome to the lysosome. Plays a role in vacuolar formation and morphology. Regulates desmin intermediate filament assembly and architecture. Plays a role in mitochondrial morphology and positioning. Required for skeletal muscle maintenance but not for myogenesis. In skeletal muscles, stabilizes MTMR12 protein levels. In Bos taurus (Bovine), this protein is Myotubularin.